A 321-amino-acid chain; its full sequence is Ribosomal RNA small subunit methyltransferase H (321 aa).

S-adenosyl-L-methionine is bound by residues 40–42 (GGH), D60, F84, D106, and Q113.

This sequence belongs to the methyltransferase superfamily. RsmH family.

It is found in the cytoplasm. It catalyses the reaction cytidine(1402) in 16S rRNA + S-adenosyl-L-methionine = N(4)-methylcytidine(1402) in 16S rRNA + S-adenosyl-L-homocysteine + H(+). In terms of biological role, specifically methylates the N4 position of cytidine in position 1402 (C1402) of 16S rRNA. This chain is Ribosomal RNA small subunit methyltransferase H, found in Pasteurella multocida (strain Pm70).